A 292-amino-acid chain; its full sequence is D-galactarolactone isomerase (292 aa).

This sequence belongs to the metallo-dependent hydrolases superfamily. Does not require a metal cofactor. is required as a cofactor.

It catalyses the reaction D-galactaro-1,5-lactone = D-galactaro-1,4-lactone. The protein operates within carbohydrate acid metabolism; D-galacturonate degradation via prokaryotic oxidative pathway. In terms of biological role, catalyzes the isomerization of D-galactaro-1,5-lactone to D-galactaro-1,4-lactone. This is a step in the oxidative degradation pathway of D-galacturonate, which allows A.tumefaciens to utilize D-galacturonate as a sole carbon source. This Agrobacterium fabrum (strain C58 / ATCC 33970) (Agrobacterium tumefaciens (strain C58)) protein is D-galactarolactone isomerase.